The primary structure comprises 425 residues: Glutamyl-tRNA reductase (425 aa).

Substrate-binding positions include 49 to 52, serine 109, 114 to 116, and glutamine 120; these read TCNR and EGQ. Catalysis depends on cysteine 50, which acts as the Nucleophile. Residue 189–194 coordinates NADP(+); it reads GAGKMS.

Belongs to the glutamyl-tRNA reductase family. As to quaternary structure, homodimer.

It catalyses the reaction (S)-4-amino-5-oxopentanoate + tRNA(Glu) + NADP(+) = L-glutamyl-tRNA(Glu) + NADPH + H(+). Its pathway is porphyrin-containing compound metabolism; protoporphyrin-IX biosynthesis; 5-aminolevulinate from L-glutamyl-tRNA(Glu): step 1/2. The protein operates within porphyrin-containing compound metabolism; chlorophyll biosynthesis. In terms of biological role, catalyzes the NADPH-dependent reduction of glutamyl-tRNA(Glu) to glutamate 1-semialdehyde (GSA). The sequence is that of Glutamyl-tRNA reductase from Picosynechococcus sp. (strain ATCC 27264 / PCC 7002 / PR-6) (Agmenellum quadruplicatum).